A 382-amino-acid chain; its full sequence is MVILLQSLQKSAYGKEPWTLTQTSLETVRSAPANCFKKGPQNIEVMFDKDPENIMVYTVWTYIYYQTLDDTWNKVEGKIDYHGAYYLEGTLKVYYIQFEVDAARFGKTGIWEVHVNEDTIFAPVTSSSPAAGEGATSIDSAPESPANRQLSSTSVSSRKRTPPRTEARRYNRKESSPTTTTTRRQKRQGQRQEDTARRSRSTSRGRQEISRGGNQRRRRRSRETSISPAWGRGGRSRRGPTTRSQSKSLSRSRSRSKSRSRGSSPRGGISPADVGSSVRSLGRKHTGRLERLLEEARDPPVILLRGDANKLKCFRFRAKKKYQDLVKYYSTTWSWVGGTSNDRIGRSRLLLAFSSNTERELFIKIMKLPPGVDWSLGYLDDL.

Residues 1-127 form a transactivation domain region; that stretch reads MVILLQSLQK…DTIFAPVTSS (127 aa). Residues 124–282 form a disordered region; the sequence is VTSSSPAAGE…DVGSSVRSLG (159 aa). The segment covering 146-156 has biased composition (polar residues); that stretch reads ANRQLSSTSVS. Basic and acidic residues predominate over residues 163 to 175; sequence PRTEARRYNRKES. Residues 250–260 are compositionally biased toward basic residues; that stretch reads SRSRSRSKSRS. Low complexity predominate over residues 261–270; the sequence is RGSSPRGGIS. The interval 298 to 382 is DNA-binding domain; it reads DPPVILLRGD…DWSLGYLDDL (85 aa).

Belongs to the papillomaviridae E2 protein family. In terms of assembly, binds DNA as homodimer. Interacts with protein E1; this interaction greatly increases E1 DNA-binding activity. Interacts with protein L1; this interaction enhances E2-dependent replication and transcription activation. Interacts with protein L2; this interaction inhibits E2 transcriptional activity but not DNA replication function E2. Interacts with protein E7; this interaction inhibits E7 oncogenic activity. Interacts with host TAF1; this interaction modulates E2-dependent transcriptional regulation. Interacts with host BRD4; this interaction mediates E2 transcriptional activation function. Additionally, the interaction with host BRD4 on mitotic chromosomes mediates tethering of the viral genome. Interacts with host TOPBP1; this interaction is required for optimal viral DNA replication. Post-translationally, phosphorylated.

Its subcellular location is the host nucleus. Plays a role in the initiation of viral DNA replication. A dimer of E2 interacts with a dimer of E1 in order to improve specificity of E1 DNA binding activity. Once the complex recognizes and binds DNA at specific sites, the E2 dimer is removed from DNA. E2 also regulates viral transcription through binding to the E2RE response element (5'-ACCNNNNNNGGT-3') present in multiple copies in the regulatory regions of the viral genome. Activates or represses transcription depending on E2RE's position with regards to proximal promoter elements including the TATA-box. Repression occurs by sterically hindering the assembly of the transcription initiation complex. In Homo sapiens (Human), this protein is Regulatory protein E2.